Here is a 365-residue protein sequence, read N- to C-terminus: Histidinol-phosphate aminotransferase (365 aa).

The disordered stretch occupies residues 1-22 (MSRPVPNPGILDIAPYTPGKSP). Position 221 is an N6-(pyridoxal phosphate)lysine (K221).

It belongs to the class-II pyridoxal-phosphate-dependent aminotransferase family. Histidinol-phosphate aminotransferase subfamily. In terms of assembly, homodimer. Requires pyridoxal 5'-phosphate as cofactor.

The enzyme catalyses L-histidinol phosphate + 2-oxoglutarate = 3-(imidazol-4-yl)-2-oxopropyl phosphate + L-glutamate. It participates in amino-acid biosynthesis; L-histidine biosynthesis; L-histidine from 5-phospho-alpha-D-ribose 1-diphosphate: step 7/9. This Nitrobacter winogradskyi (strain ATCC 25391 / DSM 10237 / CIP 104748 / NCIMB 11846 / Nb-255) protein is Histidinol-phosphate aminotransferase.